The following is a 588-amino-acid chain: Calicin (588 aa).

The region spanning serine 12–leucine 124 is the BTB domain. A BACK domain is found at cysteine 133 to phenylalanine 235. Residue serine 149 is modified to Phosphoserine. Kelch repeat units lie at residues serine 280–arginine 327, tyrosine 328–glycine 375, valine 377–aspartate 423, histidine 425–glutamine 475, aspartate 476–serine 525, and lysine 526–leucine 580.

In terms of assembly, interacts with CYLC1; the interaction may be relevant for proper acrosome attachment to the nuclear envelope. In terms of tissue distribution, expressed in testis, in spermatozoa (at protein level).

The protein localises to the cytoplasm. The protein resides in the cytoskeleton. It localises to the perinuclear theca. It is found in the calyx. In terms of biological role, required for both nuclear and acrosomal shaping during spermiogenesis. The chain is Calicin (CCIN) from Homo sapiens (Human).